Reading from the N-terminus, the 854-residue chain is Probable inactive serine/threonine-protein kinase DDB_G0274821 (854 aa).

Positions 1-266 (MPIKESFKRI…WPKLFIHPFF (266 aa)) constitute a Protein kinase domain. N-linked (GlcNAc...) asparagine glycans are attached at residues N32 and N106. The tract at residues 116–135 (NNNNNNNNNNNNNNNNNNNN) is disordered. 4 N-linked (GlcNAc...) asparagine glycosylation sites follow: N163, N279, N283, and N290. The interval 289–331 (LNKSSSSSSSSSSSSSSSSSSSSSSSLSFQQQQQPNNISSPNL) is disordered. Over residues 292–322 (SSSSSSSSSSSSSSSSSSSSSSSLSFQQQQQ) the composition is skewed to low complexity. N325, N347, and N365 each carry an N-linked (GlcNAc...) asparagine glycan. Positions 384–408 (IISPNRPSSPPLSSLSSCSSSSSSS) are disordered. N-linked (GlcNAc...) asparagine glycosylation is present at N414. The disordered stretch occupies residues 425–446 (NNNNNNNNNNNNNNNNNNNNNN). 3 N-linked (GlcNAc...) asparagine glycosylation sites follow: N520, N541, and N620. A disordered region spans residues 627-650 (SSPPPSSSSSSSSPSSPSSTSPSL). Residues 633-650 (SSSSSSSPSSPSSTSPSL) show a composition bias toward low complexity. N757 carries N-linked (GlcNAc...) asparagine glycosylation. A helical transmembrane segment spans residues 770–792 (HWRVQISFLNILFILITINNNFI).

It belongs to the protein kinase superfamily. Ser/Thr protein kinase family.

Its subcellular location is the membrane. This chain is Probable inactive serine/threonine-protein kinase DDB_G0274821, found in Dictyostelium discoideum (Social amoeba).